The sequence spans 65 residues: pH-response transcription factor pacC/RIM101 (65 aa).

A C2H2-type 1 zinc finger spans residues 16–40; sequence LTCQWNSCRTTTVKRDHITSHIRVH. Residues 46 to 65 form a C2H2-type 2; degenerate zinc finger; that stretch reads HKCEFCGKSFKRPQDLKKHV.

The protein belongs to the pacC/RIM101 family.

Its subcellular location is the nucleus. Functionally, transcription factor that mediates regulation of both acid- and alkaline-expressed genes in response to ambient pH. At alkaline ambient pH, activates transcription of alkaline-expressed genes (including pac1 itself) and represses transcription of acid-expressed genes. The sequence is that of pH-response transcription factor pacC/RIM101 (pac1) from Colletotrichum gloeosporioides (Anthracnose fungus).